Reading from the N-terminus, the 310-residue chain is p-hydroxybenzoic acid efflux pump subunit AaeA (310 aa).

Residues 12–32 (AITLVLVILAFIAIFRAWVYY) traverse the membrane as a helical segment.

This sequence belongs to the membrane fusion protein (MFP) (TC 8.A.1) family.

It is found in the cell inner membrane. Functionally, forms an efflux pump with AaeB. This Escherichia fergusonii (strain ATCC 35469 / DSM 13698 / CCUG 18766 / IAM 14443 / JCM 21226 / LMG 7866 / NBRC 102419 / NCTC 12128 / CDC 0568-73) protein is p-hydroxybenzoic acid efflux pump subunit AaeA.